Consider the following 168-residue polypeptide: MALNLQDKQAIVAEVSEVAKGALSAVVADSRGVTVDKMTELRKAGREAGVYIRVVRNTLIRRAVEGTAYECLKEAFVGPTLIAFSNEHPGAAARLFKEFAKANPAFEIKAAAFEGEFIPAANIDRLATLPTYEEAIARLMSTMKEAVAGKLVRTLAALRELREQKEVA.

It belongs to the universal ribosomal protein uL10 family. Part of the ribosomal stalk of the 50S ribosomal subunit. The N-terminus interacts with L11 and the large rRNA to form the base of the stalk. The C-terminus forms an elongated spine to which L12 dimers bind in a sequential fashion forming a multimeric L10(L12)X complex.

In terms of biological role, forms part of the ribosomal stalk, playing a central role in the interaction of the ribosome with GTP-bound translation factors. The chain is Large ribosomal subunit protein uL10 from Photorhabdus laumondii subsp. laumondii (strain DSM 15139 / CIP 105565 / TT01) (Photorhabdus luminescens subsp. laumondii).